Consider the following 276-residue polypeptide: Diaminopimelate epimerase (276 aa).

The substrate site is built by Asn-13, Gln-46, and Asn-66. Residue Cys-75 is the Proton donor of the active site. Substrate contacts are provided by residues 76 to 77 (GN), Asn-159, Asn-192, and 210 to 211 (ER). Cys-219 (proton acceptor) is an active-site residue. Residue 220–221 (GT) coordinates substrate.

Belongs to the diaminopimelate epimerase family. As to quaternary structure, homodimer.

It localises to the cytoplasm. It catalyses the reaction (2S,6S)-2,6-diaminopimelate = meso-2,6-diaminopimelate. The protein operates within amino-acid biosynthesis; L-lysine biosynthesis via DAP pathway; DL-2,6-diaminopimelate from LL-2,6-diaminopimelate: step 1/1. Its function is as follows. Catalyzes the stereoinversion of LL-2,6-diaminopimelate (L,L-DAP) to meso-diaminopimelate (meso-DAP), a precursor of L-lysine and an essential component of the bacterial peptidoglycan. The chain is Diaminopimelate epimerase from Ectopseudomonas mendocina (strain ymp) (Pseudomonas mendocina).